A 114-amino-acid polypeptide reads, in one-letter code: Transcription initiation factor IIB (114 aa).

2 consecutive repeat copies span residues 1–17 (VEQKEIGRTYRYVAQEL) and 28–109 (QYVP…EQIE).

Belongs to the TFIIB family.

Functionally, stabilizes TBP binding to an archaeal box-A promoter. Also responsible for recruiting RNA polymerase II to the pre-initiation complex (DNA-TBP-TFIIB). The protein is Transcription initiation factor IIB (tfb) of Haloarcula vallismortis (Halobacterium vallismortis).